Reading from the N-terminus, the 1368-residue chain is Beclin-1-like protein A (1368 aa).

2 stretches are compositionally biased toward low complexity: residues 24–57 (GSGS…NNGP) and 122–135 (NSII…SPSN). 5 disordered regions span residues 24-64 (GSGS…PSSE), 122-249 (NSII…SLMM), 331-431 (NKNN…STNS), 819-874 (TITP…NNNN), and 992-1048 (IDGN…NDNN). Over residues 136 to 147 (AITRNNSFNMDP) the composition is skewed to polar residues. A compositionally biased stretch (low complexity) spans 148 to 167 (NNNNNNNNNNNNNNNNNNNN). Residues 168–177 (GEYMNSSIVF) are compositionally biased toward polar residues. Residues 179 to 246 (NNVNNNNNNP…INNSVNSVNS (68 aa)) are compositionally biased toward low complexity. 2 stretches are compositionally biased toward low complexity: residues 992 to 1005 (IDGN…NDNN) and 1015 to 1048 (NNNN…NDNN). A coiled-coil region spans residues 1047–1150 (NNYNFENEIN…AIRDQLERVS (104 aa)).

Belongs to the beclin family.

Its subcellular location is the endosome membrane. Involved in autophagy. May be required to recruit the atg8-phosphatidylinositol conjugate and the atg12-atg5 conjugate to the pre-autophagosomal structure. Required for normal survival when exposed to pathogenic bacteria S.typhimurium by promoting autophagic degradation of intracellular S.typhimurium. The sequence is that of Beclin-1-like protein A (atg6A) from Dictyostelium discoideum (Social amoeba).